A 335-amino-acid polypeptide reads, in one-letter code: Beta-ketoacyl-[acyl-carrier-protein] synthase III (335 aa).

Residues C119 and H261 contribute to the active site. The interval 262–266 (QANQR) is ACP-binding. Residue N291 is part of the active site.

Belongs to the thiolase-like superfamily. FabH family. As to quaternary structure, homodimer.

Its subcellular location is the cytoplasm. It catalyses the reaction malonyl-[ACP] + acetyl-CoA + H(+) = 3-oxobutanoyl-[ACP] + CO2 + CoA. Its pathway is lipid metabolism; fatty acid biosynthesis. Its function is as follows. Catalyzes the condensation reaction of fatty acid synthesis by the addition to an acyl acceptor of two carbons from malonyl-ACP. Catalyzes the first condensation reaction which initiates fatty acid synthesis and may therefore play a role in governing the total rate of fatty acid production. Possesses both acetoacetyl-ACP synthase and acetyl transacylase activities. Its substrate specificity determines the biosynthesis of branched-chain and/or straight-chain of fatty acids. The polypeptide is Beta-ketoacyl-[acyl-carrier-protein] synthase III (Prochlorococcus marinus subsp. pastoris (strain CCMP1986 / NIES-2087 / MED4)).